The chain runs to 344 residues: Phenylalanine--tRNA ligase alpha subunit (344 aa).

Glutamate 255 contacts Mg(2+).

It belongs to the class-II aminoacyl-tRNA synthetase family. Phe-tRNA synthetase alpha subunit type 1 subfamily. In terms of assembly, tetramer of two alpha and two beta subunits. Requires Mg(2+) as cofactor.

Its subcellular location is the cytoplasm. The enzyme catalyses tRNA(Phe) + L-phenylalanine + ATP = L-phenylalanyl-tRNA(Phe) + AMP + diphosphate + H(+). This is Phenylalanine--tRNA ligase alpha subunit from Cytophaga hutchinsonii (strain ATCC 33406 / DSM 1761 / CIP 103989 / NBRC 15051 / NCIMB 9469 / D465).